The following is a 389-amino-acid chain: Adenylyltransferase and sulfurtransferase uba4 (389 aa).

ATP contacts are provided by residues Gly40, Asp61, 68–72, Lys85, and 129–130; these read SNLHR and DT. 2 residues coordinate Zn(2+): Cys171 and Cys174. Catalysis depends on Cys188, which acts as the Glycyl thioester intermediate; for adenylyltransferase activity. Zn(2+)-binding residues include Cys252 and Cys255. Positions 298-387 constitute a Rhodanese domain; that stretch reads AQRAPYLVDV…WSRQIDPNFP (90 aa). The active-site Cysteine persulfide intermediate is the Cys347.

This sequence in the N-terminal section; belongs to the HesA/MoeB/ThiF family. UBA4 subfamily. Requires Zn(2+) as cofactor.

The protein resides in the cytoplasm. It is found in the cytosol. The catalysed reaction is [molybdopterin-synthase sulfur-carrier protein]-C-terminal Gly-Gly + ATP + H(+) = [molybdopterin-synthase sulfur-carrier protein]-C-terminal Gly-Gly-AMP + diphosphate. It catalyses the reaction [molybdopterin-synthase sulfur-carrier protein]-C-terminal Gly-Gly-AMP + S-sulfanyl-L-cysteinyl-[cysteine desulfurase] + AH2 = [molybdopterin-synthase sulfur-carrier protein]-C-terminal-Gly-aminoethanethioate + L-cysteinyl-[cysteine desulfurase] + A + AMP + 2 H(+). It functions in the pathway tRNA modification; 5-methoxycarbonylmethyl-2-thiouridine-tRNA biosynthesis. It participates in cofactor biosynthesis; molybdopterin biosynthesis. In terms of biological role, plays a central role in 2-thiolation of mcm(5)S(2)U at tRNA wobble positions of cytosolic tRNA(Lys), tRNA(Glu) and tRNA(Gln). Also essential during biosynthesis of the molybdenum cofactor. Acts by mediating the C-terminal thiocarboxylation of sulfur carriers URM1 and CNX5/MOCS2A. Its N-terminus first activates urm1 and mocs2a as acyl-adenylates (-COAMP), then the persulfide sulfur on the catalytic cysteine is transferred to URM1 and CNX5/MOCS2A to form thiocarboxylation (-COSH) of their C-terminus. The reaction probably involves hydrogen sulfide that is generated from the persulfide intermediate and that acts as a nucleophile towards URM1 and CNX5/MOCS2A. Subsequently, a transient disulfide bond is formed. Does not use thiosulfate as sulfur donor; NFS1 probably acting as a sulfur donor for thiocarboxylation reactions. Required for growth on nitrate as a sole nitrogen source. The chain is Adenylyltransferase and sulfurtransferase uba4 from Ogataea parapolymorpha (strain ATCC 26012 / BCRC 20466 / JCM 22074 / NRRL Y-7560 / DL-1) (Yeast).